A 36-amino-acid chain; its full sequence is Fructose-1,6-/sedoheptulose-1,7-bisphosphate aldolase (36 aa).

This chain is Fructose-1,6-/sedoheptulose-1,7-bisphosphate aldolase (cbbA), found in Nitrobacter vulgaris.